The following is a 137-amino-acid chain: Maltose regulon regulatory protein MalI (137 aa).

The 55-residue stretch at 6 to 60 folds into the HTH lacI-type domain; that stretch reads VTITEVAKHAGVSVTTVSMVLGNKGRISPDTIEKVNASVEALGYIRNRAAANLRS. A DNA-binding region (H-T-H motif) is located at residues 8 to 27; sequence ITEVAKHAGVSVTTVSMVLG.

Repressor for the malX and malY genes. The chain is Maltose regulon regulatory protein MalI (malI) from Vibrio furnissii.